The sequence spans 1755 residues: Transposon Ty1-DR5 Gag-Pol polyprotein (1755 aa).

3 stretches are compositionally biased toward polar residues: residues 1–10 (MESQQLSNYP), 48–60 (TKAN…TPAS), and 127–152 (QSQF…GNTF). 3 disordered regions span residues 1–93 (MESQ…MMTQ), 126–173 (PQSQ…RPPP), and 352–421 (GSRN…SKST). Low complexity predominate over residues 153–165 (TDSSSADSDMTST). The RNA-binding stretch occupies residues 299–401 (NNGIHINNKV…NSKSKTARAH (103 aa)). The span at 402–418 (NVSTSNNSPSTDNDSIS) shows a compositional bias: low complexity. Asp461 acts as the For protease activity; shared with dimeric partner in catalysis. An integrase-type zinc finger-like region spans residues 583-640 (NVHTSESTRKYPYPFIHRMLAHANAQTIRYSLKNNTITYFNESDVDWSSAIDYQCPDC). An Integrase catalytic domain is found at 660–835 (NSYEPFQYLH…AGLDISTLLP (176 aa)). The Mg(2+) site is built by Asp671 and Asp736. Disordered stretches follow at residues 956–1087 (SKAV…ETEK), 1092–1111 (RSPS…NIVP), and 1130–1187 (DLPL…DNET). The segment covering 960–969 (SPTDSTPPST) has biased composition (low complexity). Residues 1005 to 1015 (STPQISNIEST) show a composition bias toward polar residues. Residues 1038-1053 (ESSHASKSKDFRHSDS) are compositionally biased toward basic and acidic residues. Composition is skewed to polar residues over residues 1054–1082 (YSEN…QISD) and 1101–1111 (PENNSSHNIVP). The Bipartite nuclear localization signal signature appears at 1178–1212 (KKRSLEDNETEIKVSRDTWNTKNMRSLEPPRSKKR). The Reverse transcriptase Ty1/copia-type domain occupies 1338-1476 (NNYYITQLDI…DILGLEIKYQ (139 aa)). Mg(2+) is bound by residues Asp1346, Asp1427, Asp1428, Asp1610, Glu1652, and Asp1685. The region spanning 1610-1752 (DASYGNQPYY…IKTFKLLTNK (143 aa)) is the RNase H Ty1/copia-type domain.

The capsid protein forms a homotrimer, from which the VLPs are assembled. The protease is a homodimer, whose active site consists of two apposed aspartic acid residues. Post-translationally, initially, virus-like particles (VLPs) are composed of the structural unprocessed proteins Gag and Gag-Pol, and also contain the host initiator methionine tRNA (tRNA(i)-Met) which serves as a primer for minus-strand DNA synthesis, and a dimer of genomic Ty RNA. Processing of the polyproteins occurs within the particle and proceeds by an ordered pathway, called maturation. First, the protease (PR) is released by autocatalytic cleavage of the Gag-Pol polyprotein yielding capsid protein p45 and a Pol-p154 precursor protein. This cleavage is a prerequisite for subsequent processing of Pol-p154 at the remaining sites to release the mature structural and catalytic proteins. Maturation takes place prior to the RT reaction and is required to produce transposition-competent VLPs.

It localises to the cytoplasm. The protein resides in the nucleus. It catalyses the reaction DNA(n) + a 2'-deoxyribonucleoside 5'-triphosphate = DNA(n+1) + diphosphate. It carries out the reaction Endonucleolytic cleavage to 5'-phosphomonoester.. Functionally, capsid protein (CA) is the structural component of the virus-like particle (VLP), forming the shell that encapsulates the retrotransposons dimeric RNA genome. The particles are assembled from trimer-clustered units and there are holes in the capsid shells that allow for the diffusion of macromolecules. CA also has nucleocapsid-like chaperone activity, promoting primer tRNA(i)-Met annealing to the multipartite primer-binding site (PBS), dimerization of Ty1 RNA and initiation of reverse transcription. Its function is as follows. The aspartyl protease (PR) mediates the proteolytic cleavages of the Gag and Gag-Pol polyproteins after assembly of the VLP. Reverse transcriptase/ribonuclease H (RT) is a multifunctional enzyme that catalyzes the conversion of the retro-elements RNA genome into dsDNA within the VLP. The enzyme displays a DNA polymerase activity that can copy either DNA or RNA templates, and a ribonuclease H (RNase H) activity that cleaves the RNA strand of RNA-DNA heteroduplexes during plus-strand synthesis and hydrolyzes RNA primers. The conversion leads to a linear dsDNA copy of the retrotransposon that includes long terminal repeats (LTRs) at both ends. In terms of biological role, integrase (IN) targets the VLP to the nucleus, where a subparticle preintegration complex (PIC) containing at least integrase and the newly synthesized dsDNA copy of the retrotransposon must transit the nuclear membrane. Once in the nucleus, integrase performs the integration of the dsDNA into the host genome. This chain is Transposon Ty1-DR5 Gag-Pol polyprotein (TY1B-DR5), found in Saccharomyces cerevisiae (strain ATCC 204508 / S288c) (Baker's yeast).